Consider the following 406-residue polypeptide: Argininosuccinate synthase (406 aa).

Residues A11–S19 and A38 each bind ATP. Positions 91 and 96 each coordinate L-citrulline. G121 is an ATP binding site. T123, N127, and D128 together coordinate L-aspartate. N127 lines the L-citrulline pocket. L-citrulline-binding residues include R131, S181, S190, E266, and Y278.

The protein belongs to the argininosuccinate synthase family. Type 1 subfamily. In terms of assembly, homotetramer.

Its subcellular location is the cytoplasm. The enzyme catalyses L-citrulline + L-aspartate + ATP = 2-(N(omega)-L-arginino)succinate + AMP + diphosphate + H(+). It participates in amino-acid biosynthesis; L-arginine biosynthesis; L-arginine from L-ornithine and carbamoyl phosphate: step 2/3. The chain is Argininosuccinate synthase from Campylobacter jejuni (strain RM1221).